Consider the following 207-residue polypeptide: Outer-membrane lipoprotein LolB (207 aa).

An N-terminal signal peptide occupies residues 1-23 (MINLRRFTKFTLAGLTALSLLGG). Cysteine 24 carries N-palmitoyl cysteine lipidation. Cysteine 24 carries S-diacylglycerol cysteine lipidation.

It belongs to the LolB family. In terms of assembly, monomer.

The protein localises to the cell outer membrane. Its function is as follows. Plays a critical role in the incorporation of lipoproteins in the outer membrane after they are released by the LolA protein. This Shewanella amazonensis (strain ATCC BAA-1098 / SB2B) protein is Outer-membrane lipoprotein LolB.